A 488-amino-acid chain; its full sequence is Glutamyl-tRNA(Gln) amidotransferase subunit A (488 aa).

Residues K77 and S152 each act as charge relay system in the active site. S176 (acyl-ester intermediate) is an active-site residue.

Belongs to the amidase family. GatA subfamily. Heterotrimer of A, B and C subunits.

The enzyme catalyses L-glutamyl-tRNA(Gln) + L-glutamine + ATP + H2O = L-glutaminyl-tRNA(Gln) + L-glutamate + ADP + phosphate + H(+). In terms of biological role, allows the formation of correctly charged Gln-tRNA(Gln) through the transamidation of misacylated Glu-tRNA(Gln) in organisms which lack glutaminyl-tRNA synthetase. The reaction takes place in the presence of glutamine and ATP through an activated gamma-phospho-Glu-tRNA(Gln). In Streptococcus equi subsp. zooepidemicus (strain MGCS10565), this protein is Glutamyl-tRNA(Gln) amidotransferase subunit A.